Reading from the N-terminus, the 212-residue chain is Ras-related protein Rab-2A (212 aa).

Ala-2 carries the N-acetylalanine modification. Residues 2–19 (AYAYLFKYIIIGDTGVGK) are required for interaction with PRKCI. Gly-16, Val-17, Gly-18, Lys-19, Ser-20, Cys-21, and Thr-38 together coordinate GTP. Position 20 (Ser-20) interacts with Mg(2+). Positions 37 to 42 (LTIGVE) match the Switch 1 motif. Thr-38 and Asp-61 together coordinate Mg(2+). Residues 63 to 72 (AGQESFRSIT) carry the Switch 2 motif. GTP contacts are provided by Gly-64, Asn-119, Lys-120, Asp-122, Ala-150, and Lys-151. S-geranylgeranyl cysteine attachment occurs at residues Cys-211 and Cys-212.

The protein belongs to the small GTPase superfamily. Rab family. As to quaternary structure, interacts with PRKCI. Interacts with TRIP11. Interacts (in GTP-bound form) with GARIN1B. Interacts (GTP-bound) with HOPS complex component VPS39; interaction contributes to obtaining a functional HOPS complex that promotes autophagosome-lysosome membrane fusion driven by STX17-SNAP29-VAMP8. May interact with VPS41. Mg(2+) is required as a cofactor. Prenylated. Prenylation is required for association with cellular membranes. Brain and parietal cells.

It is found in the endoplasmic reticulum-Golgi intermediate compartment membrane. The protein localises to the melanosome. The protein resides in the endoplasmic reticulum membrane. It localises to the golgi apparatus membrane. Its subcellular location is the cytoplasmic vesicle. It is found in the secretory vesicle. The protein localises to the acrosome. The protein resides in the autophagosome membrane. The catalysed reaction is GTP + H2O = GDP + phosphate + H(+). With respect to regulation, regulated by guanine nucleotide exchange factors (GEFs) which promote the exchange of bound GDP for free GTP, GTPase activating proteins (GAPs) which increase the GTP hydrolysis activity, and GDP dissociation inhibitors (GDIs) which inhibit the dissociation of the nucleotide from the GTPase. In terms of biological role, the small GTPases Rab are key regulators of intracellular membrane trafficking, from the formation of transport vesicles to their fusion with membranes. Rabs cycle between active GTP-bound and inactive GDP-bound states. In their active state, drive transport of vesicular carriers from donor organelles to acceptor organelles to regulate the membrane traffic that maintains organelle identity and morphology. RAB2A regulates autophagy by promoting autophagosome-lysosome fusion via recruitment of the HOPS endosomal tethering complex; this process involves autophagosomal RAB2A and lysosomal RAB39A recruitment of HOPS subcomplexes VPS39-VPS11 and VPS41-VPS16-VPS18-VPS33A, respectively, which assemble into a functional complex to mediate membrane tethering and SNAREs-driven membrane fusion. Required for protein transport from the endoplasmic reticulum to the Golgi complex. Regulates the compacted morphology of the Golgi. Together with RAB2B, redundantly required for efficient autophagic flux. This Oryctolagus cuniculus (Rabbit) protein is Ras-related protein Rab-2A (RAB2A).